The sequence spans 162 residues: Cyanate hydratase (162 aa).

Catalysis depends on residues R102, E105, and S128.

The protein belongs to the cyanase family.

It carries out the reaction cyanate + hydrogencarbonate + 3 H(+) = NH4(+) + 2 CO2. Catalyzes the reaction of cyanate with bicarbonate to produce ammonia and carbon dioxide. This is Cyanate hydratase from Mycosarcoma maydis (Corn smut fungus).